Consider the following 224-residue polypeptide: Pro-thyrotropin-releasing hormone-B (224 aa).

The first 15 residues, 1–15 (MMFLWWLLLLGTAIS), serve as a signal peptide directing secretion. Q75 is modified (pyrrolidone carboxylic acid). P77 is modified (proline amide). The span at 86-101 (EKRQHPGKRDLEDLQL) shows a compositional bias: basic and acidic residues. 2 disordered regions span residues 86–131 (EKRQ…DWSR) and 150–212 (RQHP…NSGN). Q89 is subject to Pyrrolidone carboxylic acid. A Proline amide modification is found at P91. Q105 carries the pyrrolidone carboxylic acid modification. A Proline amide modification is found at P107. The segment covering 110–129 (RYLEDMEKRQHPGKREEGDW) has biased composition (basic and acidic residues). At Q119 the chain carries Pyrrolidone carboxylic acid. P121 carries the proline amide modification. A Pyrrolidone carboxylic acid modification is found at Q151. Position 153 is a proline amide (P153). Q166 carries the pyrrolidone carboxylic acid modification. The residue at position 168 (P168) is a Proline amide. The span at 182–199 (ENSKEVGKRQHPGKRYDP) shows a compositional bias: basic and acidic residues. The residue at position 191 (Q191) is a Pyrrolidone carboxylic acid. P193 is modified (proline amide).

The protein belongs to the TRH family.

The protein resides in the secreted. The polypeptide is Pro-thyrotropin-releasing hormone-B (trh-b) (Xenopus laevis (African clawed frog)).